A 504-amino-acid polypeptide reads, in one-letter code: One cut domain family member 2 (504 aa).

Disordered regions lie at residues 29–95 (LGTL…GTAA), 166–189 (KFHH…RLSG), 274–332 (EQHL…QLEE), and 485–504 (WQDD…CTKA). The segment covering 35–56 (PAGGGSGGGGGGGGGGGGGGPG) has biased composition (gly residues). Over residues 168–186 (HHPHPHHHPHHHHHHHHQR) the composition is skewed to basic residues. Residues 324–410 (VATSGQLEEI…QRMSALRLAA (87 aa)) constitute a DNA-binding region (CUT). The homeobox DNA-binding region spans 426 to 485 (QKKSRLVFTDLQRRTLFAIFKENKRPSKEMQITISQQLGLELTTVSNFFMNARRRSLEKW). Residues 490–504 (STGGSSSTSSTCTKA) show a composition bias toward low complexity.

Belongs to the CUT homeobox family.

The protein localises to the nucleus. Functionally, transcriptional activator. Activates the transcription of a number of liver genes such as HNF3B. The protein is One cut domain family member 2 (ONECUT2) of Homo sapiens (Human).